The following is a 325-amino-acid chain: Glutarate 2-hydroxylase (325 aa).

The Fe cation site is built by His160, Asp162, and His292.

The protein belongs to the glutarate hydroxylase family. As to quaternary structure, homotetramer. The cofactor is Fe(2+).

It catalyses the reaction glutarate + 2-oxoglutarate + O2 = (S)-2-hydroxyglutarate + succinate + CO2. It functions in the pathway amino-acid degradation. Functionally, acts as an alpha-ketoglutarate-dependent dioxygenase catalyzing hydroxylation of glutarate (GA) to L-2-hydroxyglutarate (L2HG). Functions in a L-lysine degradation pathway that proceeds via cadaverine, glutarate and L-2-hydroxyglutarate. This Salmonella newport (strain SL254) protein is Glutarate 2-hydroxylase.